Here is a 202-residue protein sequence, read N- to C-terminus: Small ribosomal subunit protein bS20c (202 aa).

The transit peptide at 1–79 (MATIVQCLSS…KPMRQLIVCE (79 aa)) directs the protein to the chloroplast. A disordered region spans residues 89–110 (SAAKRARQAEKRRVYNKSKKSE).

It belongs to the bacterial ribosomal protein bS20 family. Part of the 30S ribosomal subunit.

The protein localises to the plastid. It localises to the chloroplast. Binds directly to 16S ribosomal RNA. The sequence is that of Small ribosomal subunit protein bS20c (RPS20) from Arabidopsis thaliana (Mouse-ear cress).